The primary structure comprises 360 residues: Chorismate synthase (360 aa).

NADP(+) is bound at residue Arg-47. FMN is bound by residues 124 to 126 (RAS), Gly-286, 301 to 305 (KPTAT), and Arg-327.

The protein belongs to the chorismate synthase family. As to quaternary structure, homotetramer. FMNH2 serves as cofactor.

It carries out the reaction 5-O-(1-carboxyvinyl)-3-phosphoshikimate = chorismate + phosphate. Its pathway is metabolic intermediate biosynthesis; chorismate biosynthesis; chorismate from D-erythrose 4-phosphate and phosphoenolpyruvate: step 7/7. In terms of biological role, catalyzes the anti-1,4-elimination of the C-3 phosphate and the C-6 proR hydrogen from 5-enolpyruvylshikimate-3-phosphate (EPSP) to yield chorismate, which is the branch point compound that serves as the starting substrate for the three terminal pathways of aromatic amino acid biosynthesis. This reaction introduces a second double bond into the aromatic ring system. The sequence is that of Chorismate synthase from Synechococcus sp. (strain RCC307).